A 115-amino-acid polypeptide reads, in one-letter code: uncharacterized protein (115 aa).

A compositionally biased stretch (basic residues) spans Thr90 to Arg100. Residues Thr90–Gly115 are disordered.

This is an uncharacterized protein from Saccharomyces cerevisiae (strain ATCC 204508 / S288c) (Baker's yeast).